We begin with the raw amino-acid sequence, 485 residues long: Alpha,alpha-trehalose-phosphate synthase [UDP-forming] (485 aa).

The D-glucose 6-phosphate site is built by Tyr-99 and Asp-153. The UDP site is built by Arg-290 and Lys-295. Arg-290 and Lys-295 together coordinate UDP-alpha-D-glucose. Arg-328 lines the D-glucose 6-phosphate pocket. Residues Ile-367 and 393 to 397 (LVSYE) contribute to the UDP site. UDP-alpha-D-glucose contacts are provided by residues Ile-367 and 389-397 (DGMNLVSYE).

The protein belongs to the glycosyltransferase 20 family.

It catalyses the reaction D-glucose 6-phosphate + UDP-alpha-D-glucose = alpha,alpha-trehalose 6-phosphate + UDP + H(+). It participates in carbohydrate biosynthesis. Its function is as follows. Synthase catalytic subunit of the trehalose synthase complex that catalyzes the production of trehalose from glucose-6-phosphate and UDP-alpha-D-glucose in a two step process. The protein is Alpha,alpha-trehalose-phosphate synthase [UDP-forming] of Zygosaccharomyces rouxii.